A 197-amino-acid chain; its full sequence is Protein lin-7 homolog C (197 aa).

Residue A2 is modified to N-acetylalanine. Residues 2–13 (AALGEPVRLERD) carry the Kinase interacting site motif. In terms of domain architecture, L27 spans 10 to 65 (LERDICRAIELLEKLQRSGEVPPQKLQALQRVLQSEFCNAVREVYEHVYETVDISS). The 83-residue stretch at 93-175 (VVELPKTEEG…KVKLVVRYTP (83 aa)) folds into the PDZ domain.

This sequence belongs to the lin-7 family. In terms of assembly, forms a complex with CASK and APBA1 or CASKIN1. Component of the brain-specific heterotrimeric complex (LIN-10-LIN-2-LIN-7 complex) composed of at least APBA1, CASK, and LIN7, which associates with the motor protein KIF17 to transport vesicles along microtubules. Can also interact with other modular proteins containing protein-protein interaction domains like PALS1, PALS2, MPP7, DLG1, DLG2 and DLG3 through its L27 domain. Interacts with DLG4 and GRIN2B as well as CDH1 and CTNNB1, the channels KCNJ12/Kir2.2, KCNJ4/Kir2.3 and probably KCNJ2/Kir2.1 and SLC6A12/BGT-1 via its PDZ domain. The association of LIN7A with cadherin and beta-catenin is calcium-dependent, occurs at synaptic junctions and requires the actin cytoskeleton. Interacts with EGFR, ERBB2, ERBB3 and ERBB4 with both PDZ and KID domains. Associates with KIF17 via APBA1. Interacts with HTR4. Forms a tripartite complex composed of DLG1, MPP7 and LIN7 (LIN7A or LIN7C). Interacts with MAPK12.

It localises to the cell membrane. The protein localises to the basolateral cell membrane. Its subcellular location is the cell junction. It is found in the postsynaptic density membrane. The protein resides in the tight junction. It localises to the synapse. The protein localises to the synaptosome. In terms of biological role, plays a role in establishing and maintaining the asymmetric distribution of channels and receptors at the plasma membrane of polarized cells. Forms membrane-associated multiprotein complexes that may regulate delivery and recycling of proteins to the correct membrane domains. The tripartite complex composed of LIN7 (LIN7A, LIN7B or LIN7C), CASK and APBA1 associates with the motor protein KIF17 to transport vesicles containing N-methyl-D-aspartate (NMDA) receptor subunit NR2B along microtubules. This complex may have the potential to couple synaptic vesicle exocytosis to cell adhesion in brain. Ensures the proper localization of GRIN2B (subunit 2B of the NMDA receptor) to neuronal postsynaptic density and may function in localizing synaptic vesicles at synapses where it is recruited by beta-catenin and cadherin. Required to localize Kir2 channels, GABA transporter (SLC6A12) and EGFR/ERBB1, ERBB2, ERBB3 and ERBB4 to the basolateral membrane of epithelial cells. This chain is Protein lin-7 homolog C (LIN7C), found in Bos taurus (Bovine).